The following is a 339-amino-acid chain: N-acetyl-gamma-glutamyl-phosphate reductase (339 aa).

Cys145 is a catalytic residue.

Belongs to the NAGSA dehydrogenase family. Type 1 subfamily.

Its subcellular location is the cytoplasm. It catalyses the reaction N-acetyl-L-glutamate 5-semialdehyde + phosphate + NADP(+) = N-acetyl-L-glutamyl 5-phosphate + NADPH + H(+). The protein operates within amino-acid biosynthesis; L-arginine biosynthesis; N(2)-acetyl-L-ornithine from L-glutamate: step 3/4. In terms of biological role, catalyzes the NADPH-dependent reduction of N-acetyl-5-glutamyl phosphate to yield N-acetyl-L-glutamate 5-semialdehyde. This Thermotoga petrophila (strain ATCC BAA-488 / DSM 13995 / JCM 10881 / RKU-1) protein is N-acetyl-gamma-glutamyl-phosphate reductase.